A 596-amino-acid polypeptide reads, in one-letter code: Ferredoxin--nitrite reductase, chloroplastic (596 aa).

The N-terminal 28 residues, 1-28 (MASSASLQRFLPPYPHAAASRCRPPGVR), are a transit peptide targeting the chloroplast. Residues 1-56 (MASSASLQRFLPPYPHAAASRCRPPGVRARPVQSSTVSAPSSSTPAADEAVSAERL) form a disordered region. Low complexity predominate over residues 31-47 (PVQSSTVSAPSSSTPAA). Residues Cys-474, Cys-480, Cys-515, and Cys-519 each contribute to the [4Fe-4S] cluster site. Cys-519 contacts siroheme.

Belongs to the nitrite and sulfite reductase 4Fe-4S domain family. As to quaternary structure, monomer. Siroheme is required as a cofactor. [4Fe-4S] cluster serves as cofactor.

The protein localises to the plastid. Its subcellular location is the chloroplast. It catalyses the reaction 6 oxidized [2Fe-2S]-[ferredoxin] + NH4(+) + 2 H2O = nitrite + 6 reduced [2Fe-2S]-[ferredoxin] + 8 H(+). It functions in the pathway nitrogen metabolism; nitrate reduction (assimilation). Functionally, catalyzes the six-electron reduction of nitrite to ammonium. This chain is Ferredoxin--nitrite reductase, chloroplastic, found in Oryza sativa subsp. japonica (Rice).